Here is a 280-residue protein sequence, read N- to C-terminus: 4-diphosphocytidyl-2-C-methyl-D-erythritol kinase (280 aa).

K8 is a catalytic residue. ATP is bound at residue 91–101 (PVSAGLAGGST). D133 is a catalytic residue.

Belongs to the GHMP kinase family. IspE subfamily.

The catalysed reaction is 4-CDP-2-C-methyl-D-erythritol + ATP = 4-CDP-2-C-methyl-D-erythritol 2-phosphate + ADP + H(+). Its pathway is isoprenoid biosynthesis; isopentenyl diphosphate biosynthesis via DXP pathway; isopentenyl diphosphate from 1-deoxy-D-xylulose 5-phosphate: step 3/6. Its function is as follows. Catalyzes the phosphorylation of the position 2 hydroxy group of 4-diphosphocytidyl-2C-methyl-D-erythritol. The polypeptide is 4-diphosphocytidyl-2-C-methyl-D-erythritol kinase (Clostridium botulinum (strain Eklund 17B / Type B)).